Reading from the N-terminus, the 462-residue chain is Lipase A (462 aa).

An N-terminal signal peptide occupies residues 1 to 21; it reads MRVSLRSITSLLAAATAAVLA. Cysteines 122 and 294 form a disulfide. Catalysis depends on charge relay system residues Ser205, Asp355, and His387. Cys371 and Cys415 are joined by a disulfide.

The protein belongs to the AB hydrolase superfamily. Lipase family. Monomer.

Its subcellular location is the secreted. It catalyses the reaction a triacylglycerol + H2O = a diacylglycerol + a fatty acid + H(+). In terms of biological role, hydrolyzes triglycerides, with a preference for substrates with short-chain lengths (C4 to C8). Has the highest activity with tributyrin (C4), followed by tricaproin (C6) and tricaprylin (C8). Can also hydrolyze vinylacetate (C2) and triolein (C18), but with lower efficiency. Has no activity with tripalmitin (C16). The protein is Lipase A of Moesziomyces aphidis (Pseudozyma aphidis).